Consider the following 206-residue polypeptide: Guanylate kinase (206 aa).

In terms of domain architecture, Guanylate kinase-like spans 5–183 (FNLLILSGPS…SKEIILSIAK (179 aa)). Residue 12–19 (GPSGAGKS) coordinates ATP.

Belongs to the guanylate kinase family.

It is found in the cytoplasm. It catalyses the reaction GMP + ATP = GDP + ADP. Its function is as follows. Essential for recycling GMP and indirectly, cGMP. The polypeptide is Guanylate kinase (gmk) (Helicobacter pylori (strain J99 / ATCC 700824) (Campylobacter pylori J99)).